Consider the following 377-residue polypeptide: GDSL esterase/lipase 4 (377 aa).

An N-terminal signal peptide occupies residues 1-21 (MASPRFNSIIIILFICTISLS). Residue Ser-44 is the Nucleophile of the active site. N-linked (GlcNAc...) asparagine glycans are attached at residues Asn-135, Asn-188, Asn-194, Asn-207, and Asn-241. Catalysis depends on residues Asp-342 and His-345. N-linked (GlcNAc...) asparagine glycosylation is present at Asn-364.

Belongs to the 'GDSL' lipolytic enzyme family.

Its subcellular location is the secreted. The sequence is that of GDSL esterase/lipase 4 (GLIP4) from Arabidopsis thaliana (Mouse-ear cress).